The sequence spans 545 residues: Chaperonin GroEL 2 (545 aa).

ATP-binding positions include 29-32, 86-90, Gly413, 477-479, and Asp493; these read TLGP, DGTTT, and DAA. Residues 526 to 545 form a disordered region; the sequence is PEPAAAGHGHGHGHQHGPGF. Positions 534-545 are enriched in basic residues; it reads GHGHGHQHGPGF.

This sequence belongs to the chaperonin (HSP60) family. As to quaternary structure, forms a cylinder of 14 subunits composed of two heptameric rings stacked back-to-back. Interacts with the co-chaperonin GroES.

Its subcellular location is the cytoplasm. It carries out the reaction ATP + H2O + a folded polypeptide = ADP + phosphate + an unfolded polypeptide.. Its function is as follows. Together with its co-chaperonin GroES, plays an essential role in assisting protein folding. The GroEL-GroES system forms a nano-cage that allows encapsulation of the non-native substrate proteins and provides a physical environment optimized to promote and accelerate protein folding. This chain is Chaperonin GroEL 2, found in Salinispora arenicola (strain CNS-205).